The sequence spans 200 residues: Holliday junction branch migration complex subunit RuvA (200 aa).

Residues 1-64 (MIGRIVGTLI…EDSHTLYGFI (64 aa)) form a domain I region. The segment at 65 to 143 (DKNERALFRV…QAAKTDLFSA (79 aa)) is domain II. The interval 144–149 (PAVLRQ) is flexible linker. A domain III region spans residues 150–200 (VQADPRQEAEAALISLGYKPQEAAKAIAGVPVDAANSEDVIKAALKGMLRK).

The protein belongs to the RuvA family. Homotetramer. Forms an RuvA(8)-RuvB(12)-Holliday junction (HJ) complex. HJ DNA is sandwiched between 2 RuvA tetramers; dsDNA enters through RuvA and exits via RuvB. An RuvB hexamer assembles on each DNA strand where it exits the tetramer. Each RuvB hexamer is contacted by two RuvA subunits (via domain III) on 2 adjacent RuvB subunits; this complex drives branch migration. In the full resolvosome a probable DNA-RuvA(4)-RuvB(12)-RuvC(2) complex forms which resolves the HJ.

It localises to the cytoplasm. Functionally, the RuvA-RuvB-RuvC complex processes Holliday junction (HJ) DNA during genetic recombination and DNA repair, while the RuvA-RuvB complex plays an important role in the rescue of blocked DNA replication forks via replication fork reversal (RFR). RuvA specifically binds to HJ cruciform DNA, conferring on it an open structure. The RuvB hexamer acts as an ATP-dependent pump, pulling dsDNA into and through the RuvAB complex. HJ branch migration allows RuvC to scan DNA until it finds its consensus sequence, where it cleaves and resolves the cruciform DNA. This chain is Holliday junction branch migration complex subunit RuvA, found in Marinomonas sp. (strain MWYL1).